We begin with the raw amino-acid sequence, 188 residues long: MPVADTSQLTSGVAERYASSLFDLALEQGAVDSVTADLDRFQAMLDESADLKRFVASPVFSAEDQLKAIVAISEKAGISGFFANFLKVVARNRRLFALPGMIKAFRIIAANHRGEISAEVTSAHALSQAQETELKVALKSVTGKDVTIAVTVDPSILGGLIVKVGSRQIDTSLRTKLSTLKLALKEVG.

This sequence belongs to the ATPase delta chain family. In terms of assembly, F-type ATPases have 2 components, F(1) - the catalytic core - and F(0) - the membrane proton channel. F(1) has five subunits: alpha(3), beta(3), gamma(1), delta(1), epsilon(1). F(0) has three main subunits: a(1), b(2) and c(10-14). The alpha and beta chains form an alternating ring which encloses part of the gamma chain. F(1) is attached to F(0) by a central stalk formed by the gamma and epsilon chains, while a peripheral stalk is formed by the delta and b chains.

Its subcellular location is the cell inner membrane. Its function is as follows. F(1)F(0) ATP synthase produces ATP from ADP in the presence of a proton or sodium gradient. F-type ATPases consist of two structural domains, F(1) containing the extramembraneous catalytic core and F(0) containing the membrane proton channel, linked together by a central stalk and a peripheral stalk. During catalysis, ATP synthesis in the catalytic domain of F(1) is coupled via a rotary mechanism of the central stalk subunits to proton translocation. This protein is part of the stalk that links CF(0) to CF(1). It either transmits conformational changes from CF(0) to CF(1) or is implicated in proton conduction. In Rhizobium leguminosarum bv. trifolii (strain WSM2304), this protein is ATP synthase subunit delta.